Here is a 301-residue protein sequence, read N- to C-terminus: MPT51 antigen (301 aa).

Positions 1 to 36 are cleaved as a signal peptide; the sequence is MRGLSAVVRVLCVAALAVGVFAAAVLLAGTAGNAKA.

The protein belongs to the mycobacterial A85 antigen family. As to quaternary structure, homodimer.

Its subcellular location is the secreted. In terms of biological role, may have a role in host tissue attachment, whereby ligands may include the serum protein fibronectin and small sugars. In Mycobacterium leprae (strain TN), this protein is MPT51 antigen (mpt51).